A 214-amino-acid chain; its full sequence is Adenylate kinase (214 aa).

10 to 15 (GAGKGT) contacts ATP. Positions 30–59 (STGDMLRAAIKAGSELGNKAKAVMDAGQLV) are NMP. Residues Thr31, Arg36, 57–59 (QLV), 85–88 (GFPR), and Gln92 each bind AMP. The LID stretch occupies residues 122-159 (GRRVHSGSGRVYHLVYNPPKVEGKDDVSGDDLSIRPDD). Residues Arg123 and 132-133 (VY) each bind ATP. Arg156 and Arg167 together coordinate AMP. Gln200 contributes to the ATP binding site.

The protein belongs to the adenylate kinase family. In terms of assembly, monomer.

It is found in the cytoplasm. The enzyme catalyses AMP + ATP = 2 ADP. The protein operates within purine metabolism; AMP biosynthesis via salvage pathway; AMP from ADP: step 1/1. Its function is as follows. Catalyzes the reversible transfer of the terminal phosphate group between ATP and AMP. Plays an important role in cellular energy homeostasis and in adenine nucleotide metabolism. This chain is Adenylate kinase, found in Colwellia psychrerythraea (strain 34H / ATCC BAA-681) (Vibrio psychroerythus).